The primary structure comprises 602 residues: MSERRRSAVALSSRAHAFSVEALIGSNKKRKLRDWEEKGLDLSMEALSPAGPLGDTEDAAAHGLEPHPDSEQSTGSDSEVLTERTSCSFSTHTDLASGAAGPVPAAMSSMEEIQVELQCADLWKRFHDIGTEMIITKAGRRMFPAMRVKITGLDPHQQYYIAMDIVPVDNKRYRYVYHSSKWMVAGNADSPVPPRVYIHPDSLASGDTWMRQVVSFDKLKLTNNELDDQGHIILHSMHKYQPRVHVIRKDFSSDLSPTKPVPVGDGVKTFNFPETVFTTVTAYQNQQITRLKIDRNPFAKGFRDSGRNRTGLEAIMETYAFWRPPVRTLTFEDFTTMQKQQGGSTGTSPTTSSTGTPSPSASSHLLSPSCSPPTFHLAPNTFNVGCRESQLCNLNLSDYPPCARSNMAALQSYPGLSDSGYNRLQSGTTSATQPSETFMPQRTPSLISGIPTPPSLPGNSKMEAYGGQLGSFPTSQFQYVMQAGNAASSSSSPHMFGGSHMQQSSYNAFSLHNPYNLYGYNFPTSPRLAASPEKLSASQSTLLCSSPSNGAFGERQYLPSGMEHSMHMISPSPNNQQATNTCDGRQYGAVPGSSSQMSVHMV.

Residues 46-84 (ALSPAGPLGDTEDAAAHGLEPHPDSEQSTGSDSEVLTER) are disordered. The segment covering 71 to 84 (EQSTGSDSEVLTER) has biased composition (polar residues). The segment at residues 122–304 (LWKRFHDIGT…RNPFAKGFRD (183 aa)) is a DNA-binding region (T-box). Phosphothreonine is present on threonine 330. 2 disordered regions span residues 338-369 (QKQQGGSTGTSPTTSSTGTPSPSASSHLLSPS) and 425-447 (QSGTTSATQPSETFMPQRTPSLI). Residues 346 to 369 (GTSPTTSSTGTPSPSASSHLLSPS) are compositionally biased toward low complexity. The span at 425–446 (QSGTTSATQPSETFMPQRTPSL) shows a compositional bias: polar residues.

As to quaternary structure, can form a heterodimer with TBX18.

Its subcellular location is the nucleus. Functionally, probable transcriptional regulator involved in the development of the skeleton of the limb, vertebral column and head. Acts by controlling the number of mesenchymal precursor cells and chondrocytes. The sequence is that of T-box transcription factor TBX15 (TBX15) from Homo sapiens (Human).